The chain runs to 424 residues: MTAIIDIIGREILDSRGNPTVEVDVHLEDGSFGRAAVPSGASTGAHEAVELRDGGTRYLGKGVERAVDAVNGEIFEAIGGLDAENQIQIDRTMFELDGTPNKSRLGANAILGVSLAVAKAAAEAAGLPLYRYVGGPNAHLLPVPMMNIINGGAHADNPIDFQEFMIMPVGAETLKDAVRMGSEVFHTLKKQLAADGHNTNVGDEGGFAPGLASAPAALDFIMKSIEKAGYRPGEDMYVALDCASTEFFKDGKYVLEGEGRTLEPGAMAEYLAELAGKYPIVSIEDGMAEDDWDGWKALTDLIGNKCQLVGDDLFVTNSARLRDGIKMGVANSILVKVNQIGSLSETLDAVETAHKARYTAVMSHRSGETEDSTIADLAVATNCGQIKTGSLARSDRLAKYNQLIRIEEQLGPQAQYAGRSILRG.

A (2R)-2-phosphoglycerate-binding site is contributed by Gln162. Catalysis depends on Glu204, which acts as the Proton donor. Mg(2+)-binding residues include Asp241, Glu284, and Asp311. (2R)-2-phosphoglycerate is bound by residues Lys336, Arg365, Ser366, and Lys387. Lys336 functions as the Proton acceptor in the catalytic mechanism.

The protein belongs to the enolase family. It depends on Mg(2+) as a cofactor.

The protein localises to the cytoplasm. Its subcellular location is the secreted. The protein resides in the cell surface. The enzyme catalyses (2R)-2-phosphoglycerate = phosphoenolpyruvate + H2O. Its pathway is carbohydrate degradation; glycolysis; pyruvate from D-glyceraldehyde 3-phosphate: step 4/5. In terms of biological role, catalyzes the reversible conversion of 2-phosphoglycerate (2-PG) into phosphoenolpyruvate (PEP). It is essential for the degradation of carbohydrates via glycolysis. The chain is Enolase from Sinorhizobium medicae (strain WSM419) (Ensifer medicae).